A 502-amino-acid chain; its full sequence is 1-aminocyclopropane-1-carboxylate synthase-like protein 1 (502 aa).

The segment at 1–24 (MFCLPQQESTAPTTCTGSASTQDM) is disordered. E106 serves as a coordination point for substrate. Position 324 is an N6-(pyridoxal phosphate)lysine (K324).

This sequence belongs to the class-I pyridoxal-phosphate-dependent aminotransferase family.

Its function is as follows. Does not catalyze the synthesis of 1-aminocyclopropane-1-carboxylate but is capable of catalyzing the deamination of L-vinylglycine. The protein is 1-aminocyclopropane-1-carboxylate synthase-like protein 1 (Accs) of Mus musculus (Mouse).